We begin with the raw amino-acid sequence, 160 residues long: MIFETLDEFAGAVPPMRGLIGLDLGTKTIGVALSDRLLTSASALETVKRKKFGVDADALAGLIAKHEVGGIILGLPRNMDGSEGPRAQATRAFALNLSRRGDFAHLALGFWDERLSTVAAERALIAADTSRKRRSEVIDAVAASYILQGALDRLRHLRAV.

Belongs to the YqgF nuclease family.

The protein localises to the cytoplasm. Could be a nuclease involved in processing of the 5'-end of pre-16S rRNA. This Jannaschia sp. (strain CCS1) protein is Putative pre-16S rRNA nuclease.